The chain runs to 2190 residues: Non-reducing polyketide synthase mapC' (2190 aa).

The N-terminal acylcarrier protein transacylase domain (SAT) stretch occupies residues 14–268 (VLFGPQCPDI…HHEAHREGIQ (255 aa)). The region spanning 401 to 817 (ASPIAITGMA…GSNAALIVKE (417 aa)) is the Ketosynthase family 3 (KS3) domain. Catalysis depends on for beta-ketoacyl synthase activity residues Cys-566, His-701, and His-740. The tract at residues 893–1190 (CFGGQNGLTA…NVTSALWAQG (298 aa)) is malonyl-CoA:ACP transacylase (MAT) domain. The active-site For acyl/malonyl transferase activity is Ser-979. The segment at 1243–1375 (GQEAGLLCQL…GTVCLHQERS (133 aa)) is N-terminal hotdog fold. The PKS/mFAS DH domain occupies 1243 to 1552 (GQEAGLLCQL…FTSVSIRSLT (310 aa)). Residues 1251–1556 (QLSESPDERL…SIRSLTRALA (306 aa)) form a product template (PT) domain region. His-1277 functions as the Proton acceptor; for dehydratase activity in the catalytic mechanism. The interval 1401 to 1552 (ASNGLKGSTV…FTSVSIRSLT (152 aa)) is C-terminal hotdog fold. The active-site Proton donor; for dehydratase activity is Asp-1458. Residues 1597–1671 (ANDLATVQEM…GLVEHIFPGH (75 aa)) form the Carrier domain. An O-(pantetheine 4'-phosphoryl)serine modification is found at Ser-1631. The interval 1840–2187 (ATMSPSKPIK…AEGYEFLRTH (348 aa)) is methyltransferase (CMeT) domain. Active-site for thioesterase activity residues include Ser-1969, Asp-2127, and His-2159.

It localises to the cytoplasm. Its subcellular location is the cytosol. It catalyses the reaction 3 malonyl-CoA + acetyl-CoA + S-adenosyl-L-methionine + H(+) = 5-methylorsellinate + S-adenosyl-L-homocysteine + 3 CO2 + 4 CoA. It functions in the pathway secondary metabolite biosynthesis; terpenoid biosynthesis. Non-reducing polyketide synthase; part of the gene cluster that mediates the biosynthesis of mycophenolic acid (MPA), the first isolated antibiotic natural product in the world obtained from a culture of Penicillium brevicompactum in 1893. MpaC' catalyzes the synthesis of 5-methylorsellinic acid (5MOA) via the condensation of 1 acetyl-CoA starter unit with 3 malonyl-CoA units and one methylation step. The first step of the pathway is the synthesis of 5-methylorsellinic acid (5MOA) by the cytosolic polyketide synthase mpaC. 5MOA is then converted to the phthalide compound 5,7-dihydroxy-4,6-dimethylphthalide (DHMP) by the endoplasmic reticulum-bound cytochrome P450 monooxygenase mpaDE. MpaDE first catalyzes hydroxylation of 5-MOA to 4,6-dihydroxy-2-(hydroxymethyl)-3-methylbenzoic acid (DHMB). MpaDE then acts as a lactone synthase that catalyzes the ring closure to convert DHMB into DHMP. The next step is the prenylation of DHMP by the Golgi apparatus-associated prenyltransferase mpaA to yield farnesyl-DHMP (FDHMP). The ER-bound oxygenase mpaB then mediates the oxidative cleavage the C19-C20 double bond in FDHMP to yield FDHMP-3C via a mycophenolic aldehyde intermediate. The O-methyltransferase mpaG catalyzes the methylation of FDHMP-3C to yield MFDHMP-3C. After the cytosolic methylation of FDHMP-3C, MFDHMP-3C enters into peroxisomes probably via free diffusion due to its low molecular weight. Upon a peroxisomal CoA ligation reaction, catalyzed by a beta-oxidation component enzyme acyl-CoA ligase ACL891, MFDHMP-3C-CoA would then be restricted to peroxisomes for the following beta-oxidation pathway steps. The peroxisomal beta-oxidation machinery than converts MFDHMP-3C-CoA into MPA_CoA, via a beta-oxidation chain-shortening process. Finally mpaH acts as a peroxisomal acyl-CoA hydrolase with high substrate specificity toward MPA-CoA to release the final product MPA. In Penicillium brevicompactum, this protein is Non-reducing polyketide synthase mapC'.